The sequence spans 1109 residues: MGFNEFLSSIFGNKSTRDMKEIQPWVDKIKAAYPEVAKLDNDGLRAKTEELKEYIRNSASKERAKADELRAGIENVELEDREEVFAQIDKIEKEILEIYEKALDEVLPVAFSIVKESAKRFSENEEIVVTATDFDRKLAATKDFVRIEGDKAIWQNHWNAGGNDTVWNMVHYDVQLFGGVVLHKGKIAEMATGEGKTLVATLPVFLNALTGNGVHVVTVNDYLAKRDSEWMGPLYMFHGLSVDCIDRHQPNSDARRQAYLADITFGTNNEFGFDYLRDNMAISPKDLVQRQHNYAIVDEVDSVLIDDARTPLIISGPVPKGEDQLFDQLRPLVERLVEAQKVLATKYLSEAKKLINSDDKKEVEEGFLALFRSHKALPKNKALIKFLSEQGIKAGMLKTEEIYMEQNNKRMHEATDPLYFVIDEKLNSVDLTDKGVDLITGNSEDPTLFVLPDIAAQLSELENEHGLSDEQKLEKKDALLTNYAIKSERVHTINQLLKAYTMFEKDDEYVVIDGQVKIVDEQTGRIMEGRRYSDGLHQAIEAKEGVKVEAATQTFATITLQNYFRMYHKLSGMTGTAETEAGELWDIYKLDVVVIPTNRPIARKDMNDRVYKTKREKYKAVIEEIEQLVQAGRPVLVGTTSVEISEMLSKMLTMRKIEHNVLNAKLHQKEADIVAKAGLSGTVTIATNMAGRGTDIKLSPEVKAAGGLAIIGTERHESRRVDRQLRGRAGRQGDPGSSVFFVSLEDDLMRLFSSDRIASVMDKLGFQEGEMIEHKMISNSIERAQKKVEENNFGIRKRLLEYDDVMNKQRTVVYTKRRHALMGERIGMDIVNMIWDRCAAAIENNADYEECKLDLLQTLAMEAPFTEEEFRNEKKDKLADKTFDVAMANFKRKTERLAQIANPVIKQVYENQGHMYENILIPITDGKRMYNISCNLKAAYESESKEVVKSFEKSILLHVIDESWKENLRELDELKHSVQNASYEQKDPLLIYKLESVTLFDNMVNKINNQTVSILMRGQIPVAEPTEEQQEAARRVEVRQAAPEQRQDMSKYREQKQDLNDPNQQAAAQQDTREAVKREPIRAEKTVGRNDPCPCGSGKKYKNCHGRNS.

ATP is bound by residues Gln-175, 193 to 197 (GEGKT), and Asp-695. The segment at 1038–1109 (VRQAAPEQRQ…KYKNCHGRNS (72 aa)) is disordered. Basic and acidic residues-rich tracts occupy residues 1045–1059 (QRQD…KQDL) and 1071–1088 (DTRE…KTVG). The Zn(2+) site is built by Cys-1093, Cys-1095, Cys-1104, and His-1105. Basic residues predominate over residues 1099-1109 (KKYKNCHGRNS).

This sequence belongs to the SecA family. Monomer and homodimer. Part of the essential Sec protein translocation apparatus which comprises SecA, SecYEG and auxiliary proteins SecDF. Other proteins may also be involved. Zn(2+) serves as cofactor.

It localises to the cell inner membrane. It is found in the cytoplasm. It carries out the reaction ATP + H2O + cellular proteinSide 1 = ADP + phosphate + cellular proteinSide 2.. Part of the Sec protein translocase complex. Interacts with the SecYEG preprotein conducting channel. Has a central role in coupling the hydrolysis of ATP to the transfer of proteins into and across the cell membrane, serving as an ATP-driven molecular motor driving the stepwise translocation of polypeptide chains across the membrane. The protein is Protein translocase subunit SecA of Bacteroides fragilis (strain ATCC 25285 / DSM 2151 / CCUG 4856 / JCM 11019 / LMG 10263 / NCTC 9343 / Onslow / VPI 2553 / EN-2).